The sequence spans 822 residues: Calpain-3 (822 aa).

The interval 1–36 is disordered; that stretch reads MPTVISASVAPRTGAEPRSPGPIAQAAQGKGTEAGG. In terms of domain architecture, Calpain catalytic spans 74–418; that stretch reads LFVDPEFPPD…FTKLEICNLT (345 aa). Catalysis depends on residues cysteine 129, histidine 335, and asparagine 359. The tract at residues 419 to 587 is domain III; it reads ADALESDKLQ…KRNLSEEVEN (169 aa). The segment at 588–649 is linker; sequence TISVDRPVKK…LKPGNIDQES (62 aa). The interval 600 to 651 is disordered; sequence PKPIIFGSDRANSNKELGVDQESEEGKDNTSPDKQAKSPQLKPGNIDQESKE. Basic and acidic residues predominate over residues 623–635; the sequence is EEGKDNTSPDKQA. 4 consecutive EF-hand domains span residues 650-684, 693-726, 723-758, and 788-822; these read KEQR…VVNK, FTLE…KKIK, KKIK…AGFH, and VRLE…TMYA. Positions 650–822 are domain IV; that stretch reads KEQRQFRNIF…LEWLQLTMYA (173 aa). Positions 663, 666, 668, 673, 706, 708, 710, 712, 717, 736, 738, 740, 742, 747, 801, 803, 805, and 807 each coordinate Ca(2+).

Belongs to the peptidase C2 family. In terms of assembly, homodimer; via EF-hand domain 4. Interacts with TTN/titin. Interacts with CMYA5; this interaction, which results in CMYA5 proteolysis, may protect CAPN3 from autolysis. Interacts with SIMC1. Interacts with UTP25; the interaction is required for CAPN3 translocation to the nucleolus. In terms of tissue distribution, skeletal muscle.

The protein resides in the cytoplasm. It localises to the nucleus. Its subcellular location is the nucleolus. It catalyses the reaction Broad endopeptidase activity.. Activated by micromolar concentrations of calcium and inhibited by calpastatin. Functionally, calcium-regulated non-lysosomal thiol-protease. Proteolytically cleaves CTBP1. Mediates, with UTP25, the proteasome-independent degradation of p53/TP53. The sequence is that of Calpain-3 (CAPN3) from Ovis aries (Sheep).